The primary structure comprises 217 residues: Large ribosomal subunit protein uL1A (217 aa).

Ser-2 is modified (N-acetylserine). Lys-47 is subject to N6-methyllysine; by RKM5. Phosphoserine occurs at positions 79 and 86.

It belongs to the universal ribosomal protein uL1 family. As to quaternary structure, component of the large ribosomal subunit (LSU). Mature yeast ribosomes consist of a small (40S) and a large (60S) subunit. The 40S small subunit contains 1 molecule of ribosomal RNA (18S rRNA) and 33 different proteins (encoded by 57 genes). The large 60S subunit contains 3 rRNA molecules (25S, 5.8S and 5S rRNA) and 46 different proteins (encoded by 81 genes). uL1 forms part of the L1 stalk. In terms of processing, N-terminally acetylated by acetyltransferase NatA.

Its subcellular location is the cytoplasm. Functionally, component of the ribosome, a large ribonucleoprotein complex responsible for the synthesis of proteins in the cell. The small ribosomal subunit (SSU) binds messenger RNAs (mRNAs) and translates the encoded message by selecting cognate aminoacyl-transfer RNA (tRNA) molecules. The large subunit (LSU) contains the ribosomal catalytic site termed the peptidyl transferase center (PTC), which catalyzes the formation of peptide bonds, thereby polymerizing the amino acids delivered by tRNAs into a polypeptide chain. The nascent polypeptides leave the ribosome through a tunnel in the LSU and interact with protein factors that function in enzymatic processing, targeting, and the membrane insertion of nascent chains at the exit of the ribosomal tunnel. uL1 forms part of the L1 stalk, a mobile element that plays a role in evacuating the exit-site tRNA. This chain is Large ribosomal subunit protein uL1A, found in Saccharomyces cerevisiae (strain ATCC 204508 / S288c) (Baker's yeast).